The chain runs to 458 residues: Delta(8)-fatty-acid desaturase (458 aa).

Positions 16–100 constitute a Cytochrome b5 heme-binding domain; the sequence is KKYITSKELK…LKDYQVSDIS (85 aa). Residues histidine 51 and histidine 74 each contribute to the heme site. 2 helical membrane passes run 122–142 and 147–167; these read GVIY…YGVL and FWIH…IAYL. The Histidine box-1 motif lies at 169-173; the sequence is HDAGH. Residues 185–205 traverse the membrane as a helical segment; the sequence is FAGIFIGNCITGISIAWWKWT. Positions 206-210 match the Histidine box-2 motif; the sequence is HNAHH. The next 3 helical transmembrane spans lie at 264-284, 293-313, and 320-340; these read YYPI…LLLI, GLNI…VSRL, and VAFV…FTLN. A Histidine box-3 motif is present at residues 383 to 387; it reads QLEHH.

Belongs to the fatty acid desaturase type 1 family. The cofactor is Fe cation.

It is found in the membrane. It catalyses the reaction an N-acyl-(4R)-4-hydroxysphinganine + 2 Fe(II)-[cytochrome b5] + O2 + 2 H(+) = a (4R,8E)-4-hydroxysphingenine ceramide + 2 Fe(III)-[cytochrome b5] + 2 H2O. The catalysed reaction is an N-acyl-(4R)-4-hydroxysphinganine + 2 Fe(II)-[cytochrome b5] + O2 + 2 H(+) = a (4R,8Z)-4-hydroxysphing-8-enine ceramide + 2 Fe(III)-[cytochrome b5] + 2 H2O. Functionally, plays a major role as delta(8)-fatty-acid desaturase which introduces a double bond at the 8-position in the long-chain base (LCB) of ceramides with or without a hydroxy group at the 4-position. The enzyme produces both the 8E and 8Z isomers. This structural modification contributes to the quantitative partitioning of ceramides between the two major sphingolipid classes, glucosylceramides and glycosylinositolphosphoryl ceramides. Sphingolipids are important membrane components involved in environmental stress responses, such as resistance to chilling, and act as cell signaling molecules. This chain is Delta(8)-fatty-acid desaturase (sld1), found in Helianthus annuus (Common sunflower).